Reading from the N-terminus, the 115-residue chain is Large ribosomal subunit protein bL19 (115 aa).

The protein belongs to the bacterial ribosomal protein bL19 family.

In terms of biological role, this protein is located at the 30S-50S ribosomal subunit interface and may play a role in the structure and function of the aminoacyl-tRNA binding site. This chain is Large ribosomal subunit protein bL19, found in Hydrogenovibrio crunogenus (strain DSM 25203 / XCL-2) (Thiomicrospira crunogena).